The primary structure comprises 323 residues: tRNA dimethylallyltransferase (323 aa).

Gly-12–Thr-19 provides a ligand contact to ATP. A substrate-binding site is contributed by Thr-14 to Thr-19. Interaction with substrate tRNA stretches follow at residues Asp-37 to Leu-40 and Gln-161 to Arg-165.

The protein belongs to the IPP transferase family. In terms of assembly, monomer. Requires Mg(2+) as cofactor.

The catalysed reaction is adenosine(37) in tRNA + dimethylallyl diphosphate = N(6)-dimethylallyladenosine(37) in tRNA + diphosphate. Functionally, catalyzes the transfer of a dimethylallyl group onto the adenine at position 37 in tRNAs that read codons beginning with uridine, leading to the formation of N6-(dimethylallyl)adenosine (i(6)A). The sequence is that of tRNA dimethylallyltransferase from Pseudomonas syringae pv. tomato (strain ATCC BAA-871 / DC3000).